The following is a 539-amino-acid chain: CTP synthase (539 aa).

The segment at 1–268 is amidoligase domain; the sequence is MSFKSIFLTG…SDFLLNKLGF (268 aa). A CTP-binding site is contributed by Ser-14. Residue Ser-14 participates in UTP binding. ATP is bound at residue 15–20; that stretch reads SLGKGL. Tyr-55 contributes to the L-glutamine binding site. Asp-72 provides a ligand contact to ATP. Residues Asp-72 and Glu-142 each contribute to the Mg(2+) site. Residues 149–151, 188–193, and Lys-224 each bind CTP; these read DIE and KTKPTQ. Residues 188-193 and Lys-224 each bind UTP; that span reads KTKPTQ. The Glutamine amidotransferase type-1 domain occupies 294–532; the sequence is RIGLVGKYLE…IRAAKAYSLE (239 aa). Gly-353 is an L-glutamine binding site. Cys-380 (nucleophile; for glutamine hydrolysis) is an active-site residue. L-glutamine contacts are provided by residues 381 to 384, Glu-404, and Arg-460; that span reads LGMQ. Catalysis depends on residues His-505 and Glu-507.

This sequence belongs to the CTP synthase family. In terms of assembly, homotetramer.

It catalyses the reaction UTP + L-glutamine + ATP + H2O = CTP + L-glutamate + ADP + phosphate + 2 H(+). The enzyme catalyses L-glutamine + H2O = L-glutamate + NH4(+). The catalysed reaction is UTP + NH4(+) + ATP = CTP + ADP + phosphate + 2 H(+). Its pathway is pyrimidine metabolism; CTP biosynthesis via de novo pathway; CTP from UDP: step 2/2. Its activity is regulated as follows. Allosterically activated by GTP, when glutamine is the substrate; GTP has no effect on the reaction when ammonia is the substrate. The allosteric effector GTP functions by stabilizing the protein conformation that binds the tetrahedral intermediate(s) formed during glutamine hydrolysis. Inhibited by the product CTP, via allosteric rather than competitive inhibition. Catalyzes the ATP-dependent amination of UTP to CTP with either L-glutamine or ammonia as the source of nitrogen. Regulates intracellular CTP levels through interactions with the four ribonucleotide triphosphates. The chain is CTP synthase from Chlamydia trachomatis serovar L2 (strain ATCC VR-902B / DSM 19102 / 434/Bu).